We begin with the raw amino-acid sequence, 637 residues long: Biosynthetic arginine decarboxylase (637 aa).

Lys101 is subject to N6-(pyridoxal phosphate)lysine. A substrate-binding site is contributed by 286 to 296; it reads FDVGGGLAVDY.

The protein belongs to the Orn/Lys/Arg decarboxylase class-II family. SpeA subfamily. Mg(2+) is required as a cofactor. Pyridoxal 5'-phosphate serves as cofactor.

The enzyme catalyses L-arginine + H(+) = agmatine + CO2. It participates in amine and polyamine biosynthesis; agmatine biosynthesis; agmatine from L-arginine: step 1/1. In terms of biological role, catalyzes the biosynthesis of agmatine from arginine. This chain is Biosynthetic arginine decarboxylase, found in Shewanella loihica (strain ATCC BAA-1088 / PV-4).